Here is a 351-residue protein sequence, read N- to C-terminus: Foldase protein PrsA 1 (351 aa).

Positions 1–22 are cleaved as a signal peptide; the sequence is MKNSNKLIASVVTLASVMALAA. C23 carries N-palmitoyl cysteine lipidation. The S-diacylglycerol cysteine moiety is linked to residue C23. In terms of domain architecture, PpiC spans 145-240; that stretch reads TPTMAVEMIT…KKFYIVKVTK (96 aa). 2 stretches are compositionally biased toward low complexity: residues 303–317 and 326–351; these read KTKA…SESS and ESEQ…PAAQ. The segment at 303–351 is disordered; that stretch reads KTKAASESSTTSESSKAAEENPSESEQTQTSSAEEPTETEAQTQEPAAQ.

Belongs to the PrsA family.

It localises to the cell membrane. The catalysed reaction is [protein]-peptidylproline (omega=180) = [protein]-peptidylproline (omega=0). Its function is as follows. Plays a major role in protein secretion by helping the post-translocational extracellular folding of several secreted proteins. In Streptococcus pyogenes serotype M6 (strain ATCC BAA-946 / MGAS10394), this protein is Foldase protein PrsA 1.